The sequence spans 342 residues: Heat-inducible transcription repressor HrcA (342 aa).

It belongs to the HrcA family.

In terms of biological role, negative regulator of class I heat shock genes (grpE-dnaK-dnaJ and groELS operons). Prevents heat-shock induction of these operons. In Oceanobacillus iheyensis (strain DSM 14371 / CIP 107618 / JCM 11309 / KCTC 3954 / HTE831), this protein is Heat-inducible transcription repressor HrcA.